The primary structure comprises 92 residues: DNA-directed RNA polymerase subunit omega (92 aa).

Belongs to the RNA polymerase subunit omega family. As to quaternary structure, the RNAP catalytic core consists of 2 alpha, 1 beta, 1 beta' and 1 omega subunit. When a sigma factor is associated with the core the holoenzyme is formed, which can initiate transcription.

It catalyses the reaction RNA(n) + a ribonucleoside 5'-triphosphate = RNA(n+1) + diphosphate. In terms of biological role, promotes RNA polymerase assembly. Latches the N- and C-terminal regions of the beta' subunit thereby facilitating its interaction with the beta and alpha subunits. The polypeptide is DNA-directed RNA polymerase subunit omega (Shewanella denitrificans (strain OS217 / ATCC BAA-1090 / DSM 15013)).